Here is a 417-residue protein sequence, read N- to C-terminus: Mitochondrial tRNA-specific 2-thiouridylase 1 (417 aa).

Residues 32 to 39 (AMSSGVDS) and Met58 each bind ATP. An interaction with target base in tRNA region spans residues 122–124 (NPD). Residue Cys127 is the Nucleophile of the active site. Residues Cys127 and Cys229 are joined by a disulfide bond. Gly154 is an ATP binding site. Residues 179–181 (KDQ) form an interaction with tRNA region. Residue Cys229 is the Cysteine persulfide intermediate of the active site. An interaction with tRNA region spans residues 354-355 (RS).

It belongs to the MnmA/TRMU family.

The protein localises to the mitochondrion. It catalyses the reaction 5-taurinomethyluridine(34) in tRNA + S-sulfanyl-L-cysteinyl-[protein] + AH2 + ATP = 5-taurinomethyl-2-thiouridine(34) in tRNA + L-cysteinyl-[protein] + A + AMP + diphosphate + H(+). Catalyzes the 2-thiolation of uridine at the wobble position (U34) of mitochondrial tRNA(Lys), tRNA(Glu) and tRNA(Gln). Required for the formation of 5-taurinomethyl-2-thiouridine (tm5s2U) of mitochondrial tRNA(Lys), tRNA(Glu), and tRNA(Gln) at the wobble position. ATP is required to activate the C2 atom of the wobble base. The polypeptide is Mitochondrial tRNA-specific 2-thiouridylase 1 (SLM3) (Saccharomyces cerevisiae (strain ATCC 204508 / S288c) (Baker's yeast)).